The primary structure comprises 144 residues: Large ribosomal subunit protein uL13 (144 aa).

This sequence belongs to the universal ribosomal protein uL13 family. As to quaternary structure, part of the 50S ribosomal subunit.

This protein is one of the early assembly proteins of the 50S ribosomal subunit, although it is not seen to bind rRNA by itself. It is important during the early stages of 50S assembly. This chain is Large ribosomal subunit protein uL13, found in Mesomycoplasma hyopneumoniae (strain 7448) (Mycoplasma hyopneumoniae).